Reading from the N-terminus, the 392-residue chain is Lysine acetyltransferase (392 aa).

It carries out the reaction L-lysine + acetyl-CoA = N(6)-acetyl-L-lysine + CoA + H(+). Its pathway is amino-acid degradation; L-lysine degradation via acetylation pathway; glutarate from L-lysine: step 1/6. Its activity is regulated as follows. Activity is inhibited by 5-aminovalerate. In terms of biological role, lysine N-6-acetyl transferase (LAT) that catalyzes the first step of the lysine degradation pathway. This Yarrowia lipolytica (strain CLIB 122 / E 150) (Yeast) protein is Lysine acetyltransferase.